Consider the following 625-residue polypeptide: Putative surface protein bspA-like (625 aa).

The Extracellular segment spans residues 1–548 (MMTPGKSSKT…KAIKGGEIAG (548 aa)). An N-linked (GlcNAc...) asparagine glycan is attached at asparagine 15. 13 LRR repeats span residues 38 to 60 (CSSF…AFTG), 61 to 83 (CSSL…AFSE), 85 to 106 (SSIT…AFSG), 107 to 129 (CSKL…AFRG), 153 to 175 (CSSL…AFYG), 176 to 198 (CSSL…AFQE), 200 to 221 (SKLT…AFKR), 222 to 245 (CSSL…FYEC), 247 to 267 (KLTS…AFSK), 271 to 293 (LTSI…VFLN), 325 to 347 (IPKS…TLTH), 348 to 368 (FTNL…PESF), and 369 to 392 (IEGD…AFKD). The N-linked (GlcNAc...) asparagine glycan is linked to asparagine 227. The tract at residues 439–538 (KQSEENPNQP…TDDPSKSKEN (100 aa)) is disordered. The segment covering 443-526 (ENPNQPGENP…QPGENPSQPG (84 aa)) has biased composition (low complexity). The chain crosses the membrane as a helical span at residues 549 to 571 (IIIGSLIGICLVVAICFGVYYYF). Residues 572-625 (MRIKPKNKNDDNEGNQEDTIANGTNEVTNENVLATFDEQPNNESDSNGLDSAEV) are Cytoplasmic-facing. The segment at 577-625 (KNKNDDNEGNQEDTIANGTNEVTNENVLATFDEQPNNESDSNGLDSAEV) is disordered. Residues 588–625 (EDTIANGTNEVTNENVLATFDEQPNNESDSNGLDSAEV) are compositionally biased toward polar residues.

The protein resides in the cell membrane. Functionally, may bind host tissue. This chain is Putative surface protein bspA-like (BSPAL1), found in Trichomonas vaginalis.